Reading from the N-terminus, the 378-residue chain is Protein FAM170B (378 aa).

Disordered stretches follow at residues 1–56 (MKHH…LPDD), 244–265 (TRDQ…DSSE), and 277–378 (QQQP…QQGK). Low complexity-rich tracts occupy residues 277-339 (QQQP…QPLQ) and 349-378 (PQKQ…QQGK).

The protein belongs to the FAM170 family. In terms of assembly, interacts with GOPC. In terms of tissue distribution, exclusively expressed in adult testis (at protein level). Expression first started at postnatal week 3 in round spermatids, elongated spermatids and mature sperm.

It localises to the cytoplasmic vesicle. It is found in the secretory vesicle. The protein localises to the acrosome. The protein resides in the acrosome outer membrane. Plays a role in fertilization through the acrosome reaction. The polypeptide is Protein FAM170B (Mus musculus (Mouse)).